Reading from the N-terminus, the 1156-residue chain is Chromosome partition protein Smc (1156 aa).

ATP is bound at residue 37–44 (PNGAGKSN). Residues 167 to 499 (SGIGEYERKK…AIEREVRSFS (333 aa)) adopt a coiled-coil conformation. The 116-residue stretch at 509 to 624 (KGVYGSVSEL…VENFESAKAI (116 aa)) folds into the SMC hinge domain. Positions 654 to 1001 (GELNKRYYEE…EETENKKRKV (348 aa)) form a coiled coil.

The protein belongs to the SMC family. As to quaternary structure, homodimer.

It localises to the cytoplasm. Functionally, required for chromosome condensation and partitioning. This Aquifex aeolicus (strain VF5) protein is Chromosome partition protein Smc.